The sequence spans 389 residues: Stilbene synthase 1 (389 aa).

Residue 55 to 58 (KFQR) coordinates substrate. The active site involves cysteine 164. Substrate is bound by residues leucine 267 and 305–307 (GGR).

Belongs to the thiolase-like superfamily. Chalcone/stilbene synthases family. As to quaternary structure, homodimer.

The protein resides in the cytoplasm. It carries out the reaction 4-coumaroyl-CoA + 3 malonyl-CoA + 3 H(+) = trans-resveratrol + 4 CO2 + 4 CoA. The protein operates within phytoalexin biosynthesis; 3,4',5-trihydroxystilbene biosynthesis; 3,4',5-trihydroxystilbene from trans-4-coumarate: step 2/2. This chain is Stilbene synthase 1, found in Arachis hypogaea (Peanut).